A 601-amino-acid polypeptide reads, in one-letter code: Rhizobactin siderophore biosynthesis protein RhbF (601 aa).

This sequence belongs to the IucA/IucC family.

Its pathway is siderophore biosynthesis; rhizobactin biosynthesis. This is Rhizobactin siderophore biosynthesis protein RhbF (rhbF) from Rhizobium meliloti (strain 1021) (Ensifer meliloti).